The primary structure comprises 209 residues: Protein Bel-1 (209 aa).

3 disordered regions span residues 1 to 30 (MASK…LDLT), 123 to 143 (FLNS…PATS), and 156 to 185 (CSRP…GESG). Polar residues-rich tracts occupy residues 21–30 (SHSTSGLDLT) and 132–143 (TPKTDPTRPATS).

Its function is as follows. Transcriptional transactivator that activates the viral internal promoter (IP), thereby enhancing its own expression. This transactivation is repressed by nuclear factor I. Also transactivates the long terminal repeat (LTR) promoter, thereby inducing structural gene expression, initiating the late phase of infection. It is therefore a key regulator of viral gene expression. It directly binds to and activates DNA target sites of viral promoters and those of distinct cellular genes. Required for viral replication. This Felis catus (Cat) protein is Protein Bel-1 (bel1).